Reading from the N-terminus, the 311-residue chain is Aspartate carbamoyltransferase catalytic subunit (311 aa).

Carbamoyl phosphate contacts are provided by Arg-55 and Thr-56. Residue Lys-85 participates in L-aspartate binding. Arg-106, His-135, and Gln-138 together coordinate carbamoyl phosphate. Positions 168 and 230 each coordinate L-aspartate. Carbamoyl phosphate contacts are provided by Leu-268 and Pro-269.

The protein belongs to the aspartate/ornithine carbamoyltransferase superfamily. ATCase family. In terms of assembly, heterododecamer (2C3:3R2) of six catalytic PyrB chains organized as two trimers (C3), and six regulatory PyrI chains organized as three dimers (R2).

It catalyses the reaction carbamoyl phosphate + L-aspartate = N-carbamoyl-L-aspartate + phosphate + H(+). It functions in the pathway pyrimidine metabolism; UMP biosynthesis via de novo pathway; (S)-dihydroorotate from bicarbonate: step 2/3. Its function is as follows. Catalyzes the condensation of carbamoyl phosphate and aspartate to form carbamoyl aspartate and inorganic phosphate, the committed step in the de novo pyrimidine nucleotide biosynthesis pathway. The polypeptide is Aspartate carbamoyltransferase catalytic subunit (Klebsiella pneumoniae (strain 342)).